We begin with the raw amino-acid sequence, 364 residues long: Aminomethyltransferase (364 aa).

The protein belongs to the GcvT family. The glycine cleavage system is composed of four proteins: P, T, L and H.

It carries out the reaction N(6)-[(R)-S(8)-aminomethyldihydrolipoyl]-L-lysyl-[protein] + (6S)-5,6,7,8-tetrahydrofolate = N(6)-[(R)-dihydrolipoyl]-L-lysyl-[protein] + (6R)-5,10-methylene-5,6,7,8-tetrahydrofolate + NH4(+). The glycine cleavage system catalyzes the degradation of glycine. This Shewanella woodyi (strain ATCC 51908 / MS32) protein is Aminomethyltransferase.